The following is a 701-amino-acid chain: Elongation factor G (701 aa).

One can recognise a tr-type G domain in the interval 8–286 (DRVRNIGIIA…AVVLLLPSPL (279 aa)). Residues 17-24 (AHIDAGKT), 85-89 (DTPGH), and 139-142 (NKMD) contribute to the GTP site.

The protein belongs to the TRAFAC class translation factor GTPase superfamily. Classic translation factor GTPase family. EF-G/EF-2 subfamily.

The protein localises to the cytoplasm. Catalyzes the GTP-dependent ribosomal translocation step during translation elongation. During this step, the ribosome changes from the pre-translocational (PRE) to the post-translocational (POST) state as the newly formed A-site-bound peptidyl-tRNA and P-site-bound deacylated tRNA move to the P and E sites, respectively. Catalyzes the coordinated movement of the two tRNA molecules, the mRNA and conformational changes in the ribosome. In Herpetosiphon aurantiacus (strain ATCC 23779 / DSM 785 / 114-95), this protein is Elongation factor G.